Here is a 242-residue protein sequence, read N- to C-terminus: Anti-Pycsar protein Apyc1 (242 aa).

Residues 17 to 216 form a beta-lactamase-like region; sequence FNNNALIEQD…EMQSIIKLMH (200 aa). Residues His-59, His-61, Asp-63, His-64, His-142, Asp-162, and His-216 each contribute to the Zn(2+) site.

It belongs to the anti-Pycsar protein Apyc1 family. Homodimer. The cofactor is Zn(2+).

The catalysed reaction is 3',5'-cyclic CMP + H2O = CMP + H(+). It catalyses the reaction 3',5'-cyclic UMP + H2O = UMP + H(+). In terms of biological role, counteracts the endogenous Pycsar antiviral defense system. Phosphodiesterase that enables metal-dependent hydrolysis of host cyclic nucleotide Pycsar defense signals such as cCMP and cUMP. This is Anti-Pycsar protein Apyc1 from Saccharibacillus brassicae.